Reading from the N-terminus, the 90-residue chain is Protein LIM3 (90 aa).

An N-terminal signal peptide occupies residues 1-26 (MAAVKFLVCSVLLVVLATQSEIGLAQ). 4 disulfides stabilise this stretch: Cys-28-Cys-65, Cys-38-Cys-54, Cys-55-Cys-80, and Cys-67-Cys-87.

Belongs to the A9/FIL1 family.

It localises to the secreted. The protein is Protein LIM3 (LIM3) of Lilium longiflorum (Trumpet lily).